Reading from the N-terminus, the 459-residue chain is Glycosyl hydrolase family 109 protein (459 aa).

Residues 1 to 31 (MHNIHRRNFLKAAGAATAGLVTANIALSAYA) constitute a signal peptide (tat-type signal). Residues 64–65 (ER), Asp86, 135–138 (WEWH), 155–156 (EV), and Asn184 contribute to the NAD(+) site. Residues Tyr213, Arg232, 244–247 (YPTH), and Tyr326 each bind substrate. Tyr244 is a binding site for NAD(+).

It belongs to the Gfo/Idh/MocA family. Glycosyl hydrolase 109 subfamily. It depends on NAD(+) as a cofactor. Predicted to be exported by the Tat system. The position of the signal peptide cleavage has not been experimentally proven.

Glycosidase. The chain is Glycosyl hydrolase family 109 protein from Shewanella baltica (strain OS185).